A 122-amino-acid chain; its full sequence is Large ribosomal subunit protein uL14 (122 aa).

This sequence belongs to the universal ribosomal protein uL14 family. In terms of assembly, part of the 50S ribosomal subunit. Forms a cluster with proteins L3 and L19. In the 70S ribosome, L14 and L19 interact and together make contacts with the 16S rRNA in bridges B5 and B8.

Functionally, binds to 23S rRNA. Forms part of two intersubunit bridges in the 70S ribosome. The chain is Large ribosomal subunit protein uL14 from Carsonella ruddii (strain PV).